Consider the following 82-residue polypeptide: Putative membrane protein insertion efficiency factor (82 aa).

The protein belongs to the UPF0161 family.

The protein localises to the cell inner membrane. Could be involved in insertion of integral membrane proteins into the membrane. This is Putative membrane protein insertion efficiency factor from Francisella tularensis subsp. novicida (strain U112).